The chain runs to 266 residues: Probable dihydroorotate dehydrogenase B (NAD(+)), electron transfer subunit (266 aa).

The region spanning 5-99 is the FAD-binding FR-type domain; the sequence is NVPEVLEIKR…RGPYGRGFEL (95 aa). Residues cysteine 217, cysteine 222, cysteine 225, and cysteine 235 each coordinate [2Fe-2S] cluster.

This sequence belongs to the PyrK family. As to quaternary structure, heterotetramer of 2 PyrK and 2 PyrD type B subunits. [2Fe-2S] cluster is required as a cofactor. Requires FAD as cofactor.

It functions in the pathway pyrimidine metabolism; UMP biosynthesis via de novo pathway; orotate from (S)-dihydroorotate (NAD(+) route): step 1/1. Its function is as follows. Responsible for channeling the electrons from the oxidation of dihydroorotate from the FMN redox center in the PyrD type B subunit to the ultimate electron acceptor NAD(+). This chain is Probable dihydroorotate dehydrogenase B (NAD(+)), electron transfer subunit, found in Methanothermobacter thermautotrophicus (strain ATCC 29096 / DSM 1053 / JCM 10044 / NBRC 100330 / Delta H) (Methanobacterium thermoautotrophicum).